The sequence spans 393 residues: MSAAILGQVWTRKLLPIPWRLCVPGRCVSSNFKAADLQVQVTREPQKKPAPSQPLLFGKTFTDHMLMVEWNSKTGWGPPRIQPFQNLTLHPACSGLHYSLQLFEGLKAYKGRDKQVRLFRPWLNMDRMLRSARRLCLPDFDKQELLECIRQLIEVDKDWVPDGNGTSLYVRPVLIGNEPSLGVGMVTQALLFVILCPVGSYFPGDSMTPVSLLADPSFVRAWIGGVGDCKLGGNYGPTVAVQQEAQKKGCEQVLWLYGPDHQLTEVGTMNIFVYWTHEDGELELATPPLDGIILPGVVRQSLLDLARTWGEFRVAERKVTMKELKRALEEGRVREVFGSGTACQVCPVHQILYEGKQLHIPTMENGPELILRFQKELKAIQYGTSAHDWMLRV.

A mitochondrion-targeting transit peptide spans 1-27 (MSAAILGQVWTRKLLPIPWRLCVPGRC). Tyr169 contributes to the substrate binding site. Lys230 carries the N6-(pyridoxal phosphate)lysine modification. Residue Lys322 is modified to N6-acetyllysine.

This sequence belongs to the class-IV pyridoxal-phosphate-dependent aminotransferase family. In terms of assembly, homodimer. It depends on pyridoxal 5'-phosphate as a cofactor. In terms of tissue distribution, expressed in all tissues.

The protein localises to the mitochondrion. The catalysed reaction is L-leucine + 2-oxoglutarate = 4-methyl-2-oxopentanoate + L-glutamate. It catalyses the reaction L-isoleucine + 2-oxoglutarate = (S)-3-methyl-2-oxopentanoate + L-glutamate. It carries out the reaction L-valine + 2-oxoglutarate = 3-methyl-2-oxobutanoate + L-glutamate. Its function is as follows. Catalyzes the first reaction in the catabolism of the essential branched chain amino acids leucine, isoleucine, and valine. May also function as a transporter of branched chain alpha-keto acids. This is Branched-chain-amino-acid aminotransferase, mitochondrial (Bcat2) from Rattus norvegicus (Rat).